Reading from the N-terminus, the 365-residue chain is Bifunctional chorismate mutase/prephenate dehydratase (365 aa).

The Chorismate mutase domain maps to 1–96 (MADQDQLKAL…SCLALEQPLK (96 aa)). Arg-11, Arg-28, Lys-39, and Glu-57 together coordinate substrate. A Prephenate dehydratase domain is found at 97 to 272 (VAYLGPEGTF…NSTRFLIIGN (176 aa)). Positions 284-361 (SIIVSMRNKP…VALKVLGSYP (78 aa)) constitute an ACT domain.

The protein resides in the cytoplasm. The catalysed reaction is chorismate = prephenate. It catalyses the reaction prephenate + H(+) = 3-phenylpyruvate + CO2 + H2O. It functions in the pathway amino-acid biosynthesis; L-phenylalanine biosynthesis; phenylpyruvate from prephenate: step 1/1. It participates in metabolic intermediate biosynthesis; prephenate biosynthesis; prephenate from chorismate: step 1/1. Functionally, catalyzes the Claisen rearrangement of chorismate to prephenate and the decarboxylation/dehydration of prephenate to phenylpyruvate. This chain is Bifunctional chorismate mutase/prephenate dehydratase (pheA), found in Pseudomonas aeruginosa (strain ATCC 15692 / DSM 22644 / CIP 104116 / JCM 14847 / LMG 12228 / 1C / PRS 101 / PAO1).